We begin with the raw amino-acid sequence, 24 residues long: Fibrinogen gamma chain (24 aa).

Heterohexamer; disulfide linked. Contains 2 sets of 3 non-identical chains (alpha, beta and gamma). The 2 heterotrimers are in head to head conformation with the N-termini in a small central domain. Conversion of fibrinogen to fibrin is triggered by thrombin, which cleaves fibrinopeptides A and B from alpha and beta chains, and thus exposes the N-terminal polymerization sites responsible for the formation of the soft clot. The soft clot is converted into the hard clot by factor XIIIA which catalyzes the epsilon-(gamma-glutamyl)lysine cross-linking between gamma chains (stronger) and between alpha chains (weaker) of different monomers.

The protein localises to the secreted. Its function is as follows. Together with fibrinogen alpha (FGA) and fibrinogen beta (FGB), polymerizes to form an insoluble fibrin matrix. Has a major function in hemostasis as one of the primary components of blood clots. In addition, functions during the early stages of wound repair to stabilize the lesion and guide cell migration during re-epithelialization. Was originally thought to be essential for platelet aggregation, based on in vitro studies using anticoagulated blood. However, subsequent studies have shown that it is not absolutely required for thrombus formation in vivo. Enhances expression of SELP in activated platelets via an ITGB3-dependent pathway. Maternal fibrinogen is essential for successful pregnancy. Fibrin deposition is also associated with infection, where it protects against IFNG-mediated hemorrhage. May also facilitate the antibacterial immune response via both innate and T-cell mediated pathways. This is Fibrinogen gamma chain (FGG) from Canis lupus familiaris (Dog).